The primary structure comprises 211 residues: ATP phosphoribosyltransferase (211 aa).

This sequence belongs to the ATP phosphoribosyltransferase family. Short subfamily. Heteromultimer composed of HisG and HisZ subunits.

The protein resides in the cytoplasm. It catalyses the reaction 1-(5-phospho-beta-D-ribosyl)-ATP + diphosphate = 5-phospho-alpha-D-ribose 1-diphosphate + ATP. It functions in the pathway amino-acid biosynthesis; L-histidine biosynthesis; L-histidine from 5-phospho-alpha-D-ribose 1-diphosphate: step 1/9. Catalyzes the condensation of ATP and 5-phosphoribose 1-diphosphate to form N'-(5'-phosphoribosyl)-ATP (PR-ATP). Has a crucial role in the pathway because the rate of histidine biosynthesis seems to be controlled primarily by regulation of HisG enzymatic activity. The sequence is that of ATP phosphoribosyltransferase from Lacticaseibacillus paracasei (strain ATCC 334 / BCRC 17002 / CCUG 31169 / CIP 107868 / KCTC 3260 / NRRL B-441) (Lactobacillus paracasei).